Here is a 485-residue protein sequence, read N- to C-terminus: Hemolysin (485 aa).

The N-terminal stretch at 1-28 (MKNFKGRKFLTCVLVSLCTLNYSSISFA) is a signal peptide. 4 beta stranded membrane-spanning segments follow: residues 196 to 209 (KAQI…NAKY), 216 to 225 (IDFNAVANGE), 294 to 303 (SKDVQAAFKA), and 311 to 323 (ETSG…FEES). Positions 465-475 (ECTGLAWEWWR) match the Conserved undecapeptide motif.

Belongs to the cholesterol-dependent cytolysin family. In terms of assembly, homooligomeric pore complex of 35 to 50 subunits; when inserted in the host membrane.

It is found in the secreted. The protein localises to the host cell membrane. Functionally, a cholesterol-dependent toxin with hemolytic activity against host red blood cells. Causes cytolysis by forming pores in cholesterol containing host membranes. binding to target membranes, the protein undergoes a major conformation change, leading to its insertion in the host membrane and formation of an oligomeric pore complex. Cholesterol is required for binding to host membranes, membrane insertion and pore formation; cholesterol binding is mediated by a Thr-Leu pair in the C-terminus. Can be reversibly inactivated by oxidation. This chain is Hemolysin, found in Bacillus cereus.